The following is a 459-amino-acid chain: ATP synthase subunit beta (459 aa).

G149 to T156 contributes to the ATP binding site.

Belongs to the ATPase alpha/beta chains family. In terms of assembly, F-type ATPases have 2 components, CF(1) - the catalytic core - and CF(0) - the membrane proton channel. CF(1) has five subunits: alpha(3), beta(3), gamma(1), delta(1), epsilon(1). CF(0) has three main subunits: a(1), b(2) and c(9-12). The alpha and beta chains form an alternating ring which encloses part of the gamma chain. CF(1) is attached to CF(0) by a central stalk formed by the gamma and epsilon chains, while a peripheral stalk is formed by the delta and b chains.

It is found in the cell inner membrane. The catalysed reaction is ATP + H2O + 4 H(+)(in) = ADP + phosphate + 5 H(+)(out). Functionally, produces ATP from ADP in the presence of a proton gradient across the membrane. The catalytic sites are hosted primarily by the beta subunits. In Pseudomonas syringae pv. tomato (strain ATCC BAA-871 / DC3000), this protein is ATP synthase subunit beta.